Reading from the N-terminus, the 216-residue chain is Probable GTP-binding protein EngB (216 aa).

Positions Asp-21–Gly-192 constitute an EngB-type G domain. GTP is bound by residues Gly-29–Ser-36, Gly-56–Ser-60, Asp-75–Gly-78, Thr-142–Asp-145, and Val-170–Ser-173. The Mg(2+) site is built by Ser-36 and Thr-58. The tract at residues Ser-195–Ala-216 is disordered. Positions Ala-196–Ala-216 are enriched in acidic residues.

This sequence belongs to the TRAFAC class TrmE-Era-EngA-EngB-Septin-like GTPase superfamily. EngB GTPase family. The cofactor is Mg(2+).

Functionally, necessary for normal cell division and for the maintenance of normal septation. In Nitratidesulfovibrio vulgaris (strain DP4) (Desulfovibrio vulgaris), this protein is Probable GTP-binding protein EngB.